We begin with the raw amino-acid sequence, 314 residues long: Target of rapamycin complex subunit wat1 (314 aa).

WD repeat units lie at residues 1 to 35 (MSVQYPPQHSVLLVSSGYDHTIRFWEALSGICSRT), 38 to 76 (HADSQVNRLCISPDKKFLAAAGNPHVRLYDINTSSQMPL), 81 to 120 (GHTNNVTAIAFHCDGKWLATSSEDGTVKVWDMRAPSVQRN), 122 to 161 (DHKSPVNDLLIHPNQGELLSCDQSGRVRAWDLGENSCTHE), 165 to 204 (EEDVPMSSITVGSDGSMLIAGNNKGNCYVWRMLNHQGASL), 213 to 252 (AHQRYITRCVLSPDVKHLATCSADATVNIWSTEDMSFMLE), and 257 to 296 (GHQRWVWDCAFSADSTYLVTASSDHVARLWELSSGETIRQ). Ser-141 carries the post-translational modification Phosphoserine.

The protein belongs to the WD repeat LST8 family. As to quaternary structure, the target of rapamycin complex 1 (TORC1) is composed of at least mip1, pop3/wat1, tco89, toc1 and tor2. The target of rapamycin complex 2 (TORC2) is composed of at least bit61, pop3/wat1, sin1, ste20 and tor1. Interacts with prp2.

It localises to the cytoplasm. Its subcellular location is the nucleus. In terms of biological role, component of both TORC1 and TORC2, which regulate multiple cellular processes to control cell growth in response to environmental signals. Nutrient limitation and environmental stress signals cause inactivation of TORC1. Active TORC1 positively controls cell growth and ribosome biogenesis by regulating ribosomal protein gene expression. TORC1 negatively controls G1 cell-cycle arrest, sexual development and amino acid uptake. Represses mating, meiosis and sporulation efficiency by interfering with the functions of the transcription factor ste11 and the meiosis-promoting RNA-binding protein mei2. TORC2 is required for cell survival under various stress conditions. TORC2 positively controls G1 cell-cycle arrest, sexual development and amino acid uptake. Positively regulates amino acid uptake through the control of expression of amino acid permeases. May play a role in mRNA maturation as a coupling protein between splicing and synthesis and/or stabilization. The protein is Target of rapamycin complex subunit wat1 of Schizosaccharomyces pombe (strain 972 / ATCC 24843) (Fission yeast).